A 291-amino-acid polypeptide reads, in one-letter code: START domain-containing protein 10 (291 aa).

Position 1 is an N-acetylmethionine (Met-1). Positions 1–23 are disordered; sequence MEKPAASTEPQGSRPALGRESVQ. The START domain maps to 14-224; it reads RPALGRESVQ…MYKACIKYPE (211 aa). N6-succinyllysine occurs at positions 94, 197, and 202. Phosphoserine is present on residues Ser-253, Ser-259, Ser-284, and Ser-289. Residues 260-291 are disordered; that stretch reads LENIDESAVTESREERAGGAGGEGSDDDTSLT.

Phosphorylation at Ser-284 by CK2 negatively regulates lipid transfer activity, possibly by decreasing membrane association. As to expression, testis, kidney, liver, and intestine with the highest level in the testis.

It is found in the cell projection. The protein localises to the cilium. Its subcellular location is the flagellum. The protein resides in the cytoplasm. It localises to the membrane. Functionally, phospholipid transfer protein that preferentially selects lipid species containing a palmitoyl or stearoyl chain on the sn-1 and an unsaturated fatty acyl chain (18:1 or 18:2) on the sn-2 position. Able to transfer phosphatidylcholine (PC) and phosphatidyetanolamline (PE) between membranes. May play metabolic roles in sperm maturation or fertilization. The sequence is that of START domain-containing protein 10 (Stard10) from Mus musculus (Mouse).